A 750-amino-acid polypeptide reads, in one-letter code: Photosystem I P700 chlorophyll a apoprotein A1 (750 aa).

8 helical membrane passes run 70–93 (VFSA…FHGA), 156–179 (LYCT…FHYH), 195–219 (LNHH…HVSL), 291–309 (IAHH…GHMY), 346–369 (WHAQ…HHMY), 385–411 (LSLF…IFMV), 433–455 (AIIS…LYIH), and 531–549 (FLVH…LILL). [4Fe-4S] cluster contacts are provided by Cys573 and Cys582. Transmembrane regions (helical) follow at residues 589–610 (HVFL…HFSW) and 664–686 (LSAY…MFLF). Residue His675 participates in chlorophyll a' binding. 2 residues coordinate chlorophyll a: Met683 and Tyr691. Residue Trp692 coordinates phylloquinone. The helical transmembrane segment at 724 to 744 (AVGVTHYLLGGIATTWAFFLA) threads the bilayer.

It belongs to the PsaA/PsaB family. In terms of assembly, the PsaA/B heterodimer binds the P700 chlorophyll special pair and subsequent electron acceptors. PSI consists of a core antenna complex that captures photons, and an electron transfer chain that converts photonic excitation into a charge separation. The eukaryotic PSI reaction center is composed of at least 11 subunits. It depends on P700 is a chlorophyll a/chlorophyll a' dimer, A0 is one or more chlorophyll a, A1 is one or both phylloquinones and FX is a shared 4Fe-4S iron-sulfur center. as a cofactor.

The protein localises to the plastid. It localises to the chloroplast thylakoid membrane. The catalysed reaction is reduced [plastocyanin] + hnu + oxidized [2Fe-2S]-[ferredoxin] = oxidized [plastocyanin] + reduced [2Fe-2S]-[ferredoxin]. PsaA and PsaB bind P700, the primary electron donor of photosystem I (PSI), as well as the electron acceptors A0, A1 and FX. PSI is a plastocyanin-ferredoxin oxidoreductase, converting photonic excitation into a charge separation, which transfers an electron from the donor P700 chlorophyll pair to the spectroscopically characterized acceptors A0, A1, FX, FA and FB in turn. Oxidized P700 is reduced on the lumenal side of the thylakoid membrane by plastocyanin. This is Photosystem I P700 chlorophyll a apoprotein A1 from Daucus carota (Wild carrot).